A 185-amino-acid polypeptide reads, in one-letter code: ATP synthase subunit delta (185 aa).

The protein belongs to the ATPase delta chain family. F-type ATPases have 2 components, F(1) - the catalytic core - and F(0) - the membrane proton channel. F(1) has five subunits: alpha(3), beta(3), gamma(1), delta(1), epsilon(1). CF(0) has four main subunits: a(1), b(2) and c(10-14). The alpha and beta chains form an alternating ring which encloses part of the gamma chain. F(1) is attached to F(0) by a central stalk formed by the gamma and epsilon chains, while a peripheral stalk is formed by the delta and b chains.

Its subcellular location is the cell membrane. Its function is as follows. F(1)F(0) ATP synthase produces ATP from ADP in the presence of a proton or sodium gradient. F-type ATPases consist of two structural domains, F(1) containing the extramembraneous catalytic core and F(0) containing the membrane proton channel, linked together by a central stalk and a peripheral stalk. During catalysis, ATP synthesis in the catalytic domain of F(1) is coupled via a rotary mechanism of the central stalk subunits to proton translocation. Functionally, this protein is part of the stalk that links CF(0) to CF(1). It either transmits conformational changes from CF(0) to CF(1) or is implicated in proton conduction. The chain is ATP synthase subunit delta from Heliobacterium modesticaldum (strain ATCC 51547 / Ice1).